Consider the following 617-residue polypeptide: tRNA uridine 5-carboxymethylaminomethyl modification enzyme MnmG (617 aa).

FAD contacts are provided by residues 9–14 (GAGHAG), Val120, and Thr175. 267–281 (GPRYCPSIEDKVVRF) contributes to the NAD(+) binding site. FAD is bound at residue Gln364.

This sequence belongs to the MnmG family. In terms of assembly, homodimer. Heterotetramer of two MnmE and two MnmG subunits. Requires FAD as cofactor.

The protein localises to the cytoplasm. In terms of biological role, NAD-binding protein involved in the addition of a carboxymethylaminomethyl (cmnm) group at the wobble position (U34) of certain tRNAs, forming tRNA-cmnm(5)s(2)U34. The chain is tRNA uridine 5-carboxymethylaminomethyl modification enzyme MnmG from Onion yellows phytoplasma (strain OY-M).